The chain runs to 1195 residues: Zinc finger and BTB domain-containing protein 38 (1195 aa).

Positions 33-100 (CDVTIIVEDT…IYSSTVVVKR (68 aa)) constitute a BTB domain. A Glycyl lysine isopeptide (Lys-Gly) (interchain with G-Cter in SUMO2) cross-link involves residue lysine 43. Serine 130 carries the post-translational modification Phosphoserine. Glycyl lysine isopeptide (Lys-Gly) (interchain with G-Cter in SUMO2) cross-links involve residues lysine 145, lysine 148, lysine 151, and lysine 259. A disordered region spans residues 264 to 334 (RKPKTFSIPQ…QSSDVPGPPA (71 aa)). Over residues 270 to 280 (SIPQDSDSATE) the composition is skewed to polar residues. The interval 300–523 (PAAVLTRSKS…RRYQCIFCLE (224 aa)) is interaction with CBFA2T3. Serine 309 bears the Phosphoserine mark. Basic and acidic residues predominate over residues 314–323 (GDVHFSREDE). The segment at 342 to 364 (YNCSCCSKAFDSSTLLSAHMQLH) adopts a C2H2-type 1 zinc-finger fold. The C2H2-type 2; degenerate zinc-finger motif lies at 371-395 (LVCKYCNKQFTTLNRLDRHEQICMR). C2H2-type zinc fingers lie at residues 460-482 (YSCV…ANVH), 488-510 (YPCH…EIWH), and 516-539 (YQCI…KSFH). Glycyl lysine isopeptide (Lys-Gly) (interchain with G-Cter in SUMO2) cross-links involve residues lysine 550, lysine 557, lysine 754, lysine 758, lysine 763, lysine 804, lysine 814, lysine 821, lysine 842, lysine 850, and lysine 857. The disordered stretch occupies residues 745–804 (SDPAVSQSLKDDSKPEPDKVGRFASRPKSIKEKKKTTSHTRGEIPEESNYVADPGGSLSK). The span at 753–765 (LKDDSKPEPDKVG) shows a compositional bias: basic and acidic residues. Disordered stretches follow at residues 871–891 (QEEP…PLGL) and 903–922 (FDDA…YYNY). Residues lysine 923, lysine 964, lysine 969, lysine 977, lysine 981, lysine 991, lysine 1017, and lysine 1026 each participate in a glycyl lysine isopeptide (Lys-Gly) (interchain with G-Cter in SUMO2) cross-link. C2H2-type zinc fingers lie at residues 1010 to 1032 (YACE…MRCH), 1038 to 1060 (YQCK…ERIH), 1066 to 1088 (FVCQ…ERIH), 1094 to 1116 (YHCQ…EQRH), and 1125 to 1147 (YACF…QKKH). Residues lysine 1109, lysine 1132, lysine 1135, lysine 1150, and lysine 1183 each participate in a glycyl lysine isopeptide (Lys-Gly) (interchain with G-Cter in SUMO2) cross-link.

In terms of assembly, interacts with CBFA2T3. Interacts with ZBTB4. Interacts with RBBP6. Ubiquitinated by RBBP6; leading to its degradation by the proteasome.

It localises to the nucleus. Its subcellular location is the chromosome. In terms of biological role, transcriptional regulator with bimodal DNA-binding specificity. Binds with a higher affinity to methylated CpG dinucleotides in the consensus sequence 5'-CGCG-3' but can also bind to E-box elements (5'-CACGTG-3'). Can also bind specifically to a single methyl-CpG pair. Represses transcription in a methyl-CpG-dependent manner. Plays an important role in regulating DNA replication and common fragile sites (CFS) stability in a RBBP6- and MCM10-dependent manner; represses expression of MCM10 which plays an important role in DNA-replication. Acts as a transcriptional activator. May be involved in the differentiation and/or survival of late postmitotic neurons. This chain is Zinc finger and BTB domain-containing protein 38, found in Homo sapiens (Human).